The chain runs to 456 residues: MLNNAMSVVILAAGKGTRMYSDLPKVLHTLAGKAMVQHVIDAANELGAAHVHLVYGHGGDLLKQALKDDNLNWVLQAEQLGTGHAMQQAAPFFADDEDILMLYGDVPLISVETLQRLRDARPQGGIGLLTVKLDDPTGYGRITRENGKVTGIVEHKDATDEQRQIQEINTGILIANGADMKRWLAKLTNNNAQGEYYITDIIALAYQEGREIVAVHPQRLSEVEGVNNRLQLSRLERVYQSEQAEKLLLAGVMLRDPARFDLRGTLTHGRDVEIDTNVIIEGNVTLGHRVKIGTGCVIKNSVIGDDCEISPYTVVEDANLAAACTIGPFARLRPGAELLEGAHVGNFVEMKKARLGKGSKAGHLTYLGDAEIGDNVNIGAGTITCNYDGANKFKTIIGDDVFVGSDTQLVAPVTVGKGATIAAGTTVTRNVGENALAISRVPQTQKEGWRRPVKKK.

Positions 1 to 229 (MLNNAMSVVI…LSEVEGVNNR (229 aa)) are pyrophosphorylase. UDP-N-acetyl-alpha-D-glucosamine contacts are provided by residues 11–14 (LAAG), Lys25, Gln76, 81–82 (GT), 103–105 (YGD), Gly140, Glu154, Asn169, and Asn227. Asp105 contacts Mg(2+). Asn227 lines the Mg(2+) pocket. The linker stretch occupies residues 230 to 250 (LQLSRLERVYQSEQAEKLLLA). Residues 251–456 (GVMLRDPARF…EGWRRPVKKK (206 aa)) are N-acetyltransferase. The UDP-N-acetyl-alpha-D-glucosamine site is built by Arg333 and Lys351. Catalysis depends on His363, which acts as the Proton acceptor. Residues Tyr366 and Asn377 each coordinate UDP-N-acetyl-alpha-D-glucosamine. Acetyl-CoA contacts are provided by residues Ala380, 386 to 387 (NY), Ser405, Ala423, and Arg440.

In the N-terminal section; belongs to the N-acetylglucosamine-1-phosphate uridyltransferase family. It in the C-terminal section; belongs to the transferase hexapeptide repeat family. Homotrimer. Requires Mg(2+) as cofactor.

Its subcellular location is the cytoplasm. It catalyses the reaction alpha-D-glucosamine 1-phosphate + acetyl-CoA = N-acetyl-alpha-D-glucosamine 1-phosphate + CoA + H(+). The enzyme catalyses N-acetyl-alpha-D-glucosamine 1-phosphate + UTP + H(+) = UDP-N-acetyl-alpha-D-glucosamine + diphosphate. Its pathway is nucleotide-sugar biosynthesis; UDP-N-acetyl-alpha-D-glucosamine biosynthesis; N-acetyl-alpha-D-glucosamine 1-phosphate from alpha-D-glucosamine 6-phosphate (route II): step 2/2. It participates in nucleotide-sugar biosynthesis; UDP-N-acetyl-alpha-D-glucosamine biosynthesis; UDP-N-acetyl-alpha-D-glucosamine from N-acetyl-alpha-D-glucosamine 1-phosphate: step 1/1. The protein operates within bacterial outer membrane biogenesis; LPS lipid A biosynthesis. Catalyzes the last two sequential reactions in the de novo biosynthetic pathway for UDP-N-acetylglucosamine (UDP-GlcNAc). The C-terminal domain catalyzes the transfer of acetyl group from acetyl coenzyme A to glucosamine-1-phosphate (GlcN-1-P) to produce N-acetylglucosamine-1-phosphate (GlcNAc-1-P), which is converted into UDP-GlcNAc by the transfer of uridine 5-monophosphate (from uridine 5-triphosphate), a reaction catalyzed by the N-terminal domain. The sequence is that of Bifunctional protein GlmU from Shigella dysenteriae serotype 1 (strain Sd197).